Here is a 432-residue protein sequence, read N- to C-terminus: Bifunctional protein GlmU (432 aa).

Positions 1–223 (MGKKSIIILA…EENFKGVNSK (223 aa)) are pyrophosphorylase. UDP-N-acetyl-alpha-D-glucosamine-binding positions include 9–12 (LAAG), lysine 23, glutamine 75, and 82–83 (GT). Position 103 (aspartate 103) interacts with Mg(2+). The UDP-N-acetyl-alpha-D-glucosamine site is built by glycine 135, glutamate 149, asparagine 164, and asparagine 221. Position 221 (asparagine 221) interacts with Mg(2+). A linker region spans residues 224-244 (VELADAEVIHQNRIKKEFMKA). The tract at residues 245–432 (GVIMRLPDTI…FYKHFSSKKK (188 aa)) is N-acetyltransferase. UDP-N-acetyl-alpha-D-glucosamine contacts are provided by arginine 308 and lysine 325. The active-site Proton acceptor is the histidine 336. Tyrosine 339 and asparagine 350 together coordinate UDP-N-acetyl-alpha-D-glucosamine. Acetyl-CoA-binding positions include 359-360 (NY), serine 378, alanine 396, and arginine 413.

This sequence in the N-terminal section; belongs to the N-acetylglucosamine-1-phosphate uridyltransferase family. In the C-terminal section; belongs to the transferase hexapeptide repeat family. In terms of assembly, homotrimer. The cofactor is Mg(2+).

The protein resides in the cytoplasm. The catalysed reaction is alpha-D-glucosamine 1-phosphate + acetyl-CoA = N-acetyl-alpha-D-glucosamine 1-phosphate + CoA + H(+). It carries out the reaction N-acetyl-alpha-D-glucosamine 1-phosphate + UTP + H(+) = UDP-N-acetyl-alpha-D-glucosamine + diphosphate. Its pathway is nucleotide-sugar biosynthesis; UDP-N-acetyl-alpha-D-glucosamine biosynthesis; N-acetyl-alpha-D-glucosamine 1-phosphate from alpha-D-glucosamine 6-phosphate (route II): step 2/2. The protein operates within nucleotide-sugar biosynthesis; UDP-N-acetyl-alpha-D-glucosamine biosynthesis; UDP-N-acetyl-alpha-D-glucosamine from N-acetyl-alpha-D-glucosamine 1-phosphate: step 1/1. It participates in bacterial outer membrane biogenesis; LPS lipid A biosynthesis. Its function is as follows. Catalyzes the last two sequential reactions in the de novo biosynthetic pathway for UDP-N-acetylglucosamine (UDP-GlcNAc). The C-terminal domain catalyzes the transfer of acetyl group from acetyl coenzyme A to glucosamine-1-phosphate (GlcN-1-P) to produce N-acetylglucosamine-1-phosphate (GlcNAc-1-P), which is converted into UDP-GlcNAc by the transfer of uridine 5-monophosphate (from uridine 5-triphosphate), a reaction catalyzed by the N-terminal domain. The protein is Bifunctional protein GlmU of Aliarcobacter butzleri (strain RM4018) (Arcobacter butzleri).